Reading from the N-terminus, the 286-residue chain is uncharacterized protein (286 aa).

NAD(+)-binding positions include 4 to 18 (AVIG…IARN) and Thr95. Residue Lys171 is part of the active site. NAD(+) is bound at residue Lys239.

It belongs to the HIBADH-related family.

This is an uncharacterized protein from Bacillus subtilis (strain 168).